The chain runs to 541 residues: MAKFIFITGGVVSGLGKGITAASLGRLIKSRGYRVTALKFDPYLNVDPGTMSPIQHGEVFVTEDGGECDLDVGHYERFMDVNMGKGNNVTTGKIYSSVIAKERRGDYLGGTVQVIPHITNEIKSHIRRVAEDSDADVILVEIGGTVGDIEGQPFLEAIRQFKNEVPSKDDVLFIHVTLVPYIAASGELKTKPTQHSVRELRSIGIQPDVIVCRSDREIPKDLREKIALFCDVPPEAVIPNEDLGSLYEVPLAMEKEGLAEIVCRRLGLDSRTPDLAEWEALVQRAKHPEREVEIALVGKYVALEDAYLSVVESLNHAGIHNNARVRIHWVDSEKLENGITPEALEACLGRADGILVPGGFGYRGIEGKINAIRYAREKGIPFFGICMGMQSAVIEAARNLLGLSKANSTEFVTDCKDPVIDMMAQQKQVTDLGGTMRLGAFPCRLKPGSKAHAAYGTEVVHERHRHRFEVNNAYLERLEAVGLKAVGVWPEGNLVEVVEMEGHPWFVGVQFHPEFKSRPNRPHPLFRDFIKAALEYRAGKK.

An amidoligase domain region spans residues 1–268 (MAKFIFITGG…AEIVCRRLGL (268 aa)). Position 13 (Ser-13) interacts with CTP. Residue Ser-13 coordinates UTP. ATP contacts are provided by residues 14-19 (GLGKGI) and Asp-71. Mg(2+)-binding residues include Asp-71 and Glu-141. CTP-binding positions include 148–150 (DIE), 189–194 (KTKPTQ), and Lys-225. UTP contacts are provided by residues 189–194 (KTKPTQ) and Lys-225. One can recognise a Glutamine amidotransferase type-1 domain in the interval 293 to 539 (EIALVGKYVA…IKAALEYRAG (247 aa)). Gly-359 provides a ligand contact to L-glutamine. Cys-386 acts as the Nucleophile; for glutamine hydrolysis in catalysis. Residues 387–390 (MGMQ), Glu-410, and Arg-467 each bind L-glutamine. Active-site residues include His-512 and Glu-514.

It belongs to the CTP synthase family. Homotetramer.

It carries out the reaction UTP + L-glutamine + ATP + H2O = CTP + L-glutamate + ADP + phosphate + 2 H(+). It catalyses the reaction L-glutamine + H2O = L-glutamate + NH4(+). The enzyme catalyses UTP + NH4(+) + ATP = CTP + ADP + phosphate + 2 H(+). It functions in the pathway pyrimidine metabolism; CTP biosynthesis via de novo pathway; CTP from UDP: step 2/2. With respect to regulation, allosterically activated by GTP, when glutamine is the substrate; GTP has no effect on the reaction when ammonia is the substrate. The allosteric effector GTP functions by stabilizing the protein conformation that binds the tetrahedral intermediate(s) formed during glutamine hydrolysis. Inhibited by the product CTP, via allosteric rather than competitive inhibition. Its function is as follows. Catalyzes the ATP-dependent amination of UTP to CTP with either L-glutamine or ammonia as the source of nitrogen. Regulates intracellular CTP levels through interactions with the four ribonucleotide triphosphates. This chain is CTP synthase, found in Symbiobacterium thermophilum (strain DSM 24528 / JCM 14929 / IAM 14863 / T).